Consider the following 145-residue polypeptide: Hydrophobin-like protein 1 (145 aa).

Positions 1-20 are cleaved as a signal peptide; the sequence is MYLLQISISLLLLISTAATA. N36 is a glycosylation site (N-linked (GlcNAc...) asparagine). 4 cysteine pairs are disulfide-bonded: C61-C121, C71-C113, C72-C104, and C122-C139.

The protein localises to the secreted. It is found in the cell wall. In terms of biological role, aerial growth, conidiation, and dispersal of filamentous fungi in the environment rely upon a capability of their secreting small amphipathic proteins called hydrophobins (HPBs) with low sequence identity. Class I can self-assemble into an outermost layer of rodlet bundles on aerial cell surfaces, conferring cellular hydrophobicity that supports fungal growth, development and dispersal; whereas Class II form highly ordered films at water-air interfaces through intermolecular interactions but contribute nothing to the rodlet structure. In Botryotinia fuckeliana, hydrophobins are not involved in conferring surface hydrophobicity to conidia and aerial hyphae and their function in sclerotia and fruiting bodies remains to be investigated. The sequence is that of Hydrophobin-like protein 1 from Botryotinia fuckeliana (strain B05.10) (Noble rot fungus).